Reading from the N-terminus, the 275-residue chain is Calcyphosin (275 aa).

The segment at 59-87 (PGTTQLTQGPAGRTLGQTQASCPEPRPSM) is disordered. EF-hand domains follow at residues 107 to 142 (SGIQ…LGLV), 143 to 178 (LDQA…PMSQ), 179 to 214 (AREA…RAHP), and 222 to 258 (TEDE…VSAS). Positions 120, 122, 124, 126, 131, 156, 158, 160, 162, 167, 192, 194, 196, and 203 each coordinate Ca(2+). Residue S126 is modified to Phosphoserine; by PKA.

As to quaternary structure, monomer. Does not form oligomers in the presence of calcium.

The protein localises to the cytoplasm. Its function is as follows. Calcium-binding protein. May play a role in cellular signaling events (Potential). The protein is Calcyphosin of Homo sapiens (Human).